A 132-amino-acid polypeptide reads, in one-letter code: Actin-related protein 2/3 complex subunit 5A (132 aa).

A2 is subject to N-acetylalanine.

Belongs to the ARPC5 family. As to quaternary structure, component of the Arp2/3 complex composed of ARP2, ARP3, ARPC1/p41-ARC, ARPC2/p34-ARC, ARPC3/p21-ARC, ARPC4/p20-ARC and ARPC5/p16-ARC. As to expression, expressed at low levels in all tissues with a relatively highest expression in inflorescences.

The protein resides in the cytoplasm. Its subcellular location is the cytoskeleton. It is found in the cell projection. In terms of biological role, functions as a component of the Arp2/3 complex which is involved in regulation of actin polymerization and together with an activating nucleation-promoting factor (NPF) mediates the formation of branched actin networks. Arp2/3 complex plays a critical role in the control of cell morphogenesis via the modulation of cell polarity development. The chain is Actin-related protein 2/3 complex subunit 5A (ARPC5A) from Arabidopsis thaliana (Mouse-ear cress).